The chain runs to 156 residues: MPRKGPAPKRQLMTDPVYGSPLVTALINKVLRDGKRSLAQSIVYNALEGAREKTGQDPLVILKRAIDNVKPTLEVRSRRVGGATYQVPVEVRASRSTTLALRWLVQYARLRREKTMTERLMNELVDASNGLGAAVKRREDTHKMAESNKAFAHYRW.

Belongs to the universal ribosomal protein uS7 family. Part of the 30S ribosomal subunit. Contacts proteins S9 and S11.

In terms of biological role, one of the primary rRNA binding proteins, it binds directly to 16S rRNA where it nucleates assembly of the head domain of the 30S subunit. Is located at the subunit interface close to the decoding center, probably blocks exit of the E-site tRNA. In Thermobifida fusca (strain YX), this protein is Small ribosomal subunit protein uS7.